The sequence spans 171 residues: MNHFELFRLPFQFELDGGLLSTQFRELQRRFHPDNFATASERDRLMSVQKAAQINDAFQTLKNPISRAEYMLSEQDMDIRGEQKTLQDPEFLMQQMELREELEDISDASDPESALFDFEQQVTALYKSQLSALEQLLNQDDWEEAADAVRKLKFIDKLRYEIERLEETFFD.

Positions 2 to 74 constitute a J domain; it reads NHFELFRLPF…ISRAEYMLSE (73 aa).

Belongs to the HscB family. Interacts with HscA and stimulates its ATPase activity.

Functionally, co-chaperone involved in the maturation of iron-sulfur cluster-containing proteins. Seems to help targeting proteins to be folded toward HscA. This is Co-chaperone protein HscB homolog from Photobacterium profundum (strain SS9).